We begin with the raw amino-acid sequence, 458 residues long: ATP synthase subunit beta (458 aa).

Residue 148-155 coordinates ATP; it reads GGAGVGKT.

It belongs to the ATPase alpha/beta chains family. As to quaternary structure, F-type ATPases have 2 components, CF(1) - the catalytic core - and CF(0) - the membrane proton channel. CF(1) has five subunits: alpha(3), beta(3), gamma(1), delta(1), epsilon(1). CF(0) has three main subunits: a(1), b(2) and c(9-12). The alpha and beta chains form an alternating ring which encloses part of the gamma chain. CF(1) is attached to CF(0) by a central stalk formed by the gamma and epsilon chains, while a peripheral stalk is formed by the delta and b chains.

The protein resides in the cell inner membrane. It carries out the reaction ATP + H2O + 4 H(+)(in) = ADP + phosphate + 5 H(+)(out). In terms of biological role, produces ATP from ADP in the presence of a proton gradient across the membrane. The catalytic sites are hosted primarily by the beta subunits. The protein is ATP synthase subunit beta of Pseudomonas fluorescens (strain ATCC BAA-477 / NRRL B-23932 / Pf-5).